The primary structure comprises 890 residues: DNA mismatch repair protein MutS (890 aa).

607-614 (GPNMSGKS) provides a ligand contact to ATP. Residues 832 to 851 (ESQLSFFGTEQSSKKQDKPV) form a disordered region.

This sequence belongs to the DNA mismatch repair MutS family.

Functionally, this protein is involved in the repair of mismatches in DNA. It is possible that it carries out the mismatch recognition step. This protein has a weak ATPase activity. This Bacillus cereus (strain 03BB102) protein is DNA mismatch repair protein MutS.